A 386-amino-acid polypeptide reads, in one-letter code: MAIRKSQVYLSLANSYLIDSPQPSTLNYWYNLGSLLGLCLVIQIASGIFLAMHYSSHIDLAFASVEHIMRDVNYGYLIRYIHANGASFFFVCMYAHIGKAIYYGSYKSPRVLVWVIGVVIFIITMATAFLGYCWVYGQMSHWGATVITNLFSAIPFIGKDLVPFIWGSFSVSNPTIQRFFALHYLCPFILAALVIMHLMALHVHGSSNPLGISSNIDRLPFHGYFVFKDLVTVFVFLLIFSLFVFFSPNTLGHPDNYIPGNPLVTPASIVPEWYLLPFYAILRSIPDKLGGVIAMFAAILILLVLPVTDRSVVRGNTFKIISKTFFFLFLYNFILLGQLGQLHVEVPFIQLGQFATLNYFLYFIFIVPVVSTLENILFYIGRVHNN.

The next 4 membrane-spanning stretches (helical) occupy residues 32-52 (LGSL…FLAM), 76-98 (YLIR…AHIG), 113-133 (VWVI…LGYC), and 179-199 (FFAL…MHLM). Heme b-binding residues include H82 and H96. H183 and H197 together coordinate heme b. Residue H202 participates in a ubiquinone binding. 4 consecutive transmembrane segments (helical) span residues 225 to 245 (FVFK…LFVF), 289 to 309 (LGGV…PVTD), 321 to 341 (ISKT…QLGQ), and 348 to 368 (FIQL…FIVP).

It belongs to the cytochrome b family. As to quaternary structure, fungal cytochrome b-c1 complex contains 10 subunits; 3 respiratory subunits, 2 core proteins and 5 low-molecular weight proteins. Cytochrome b-c1 complex is a homodimer. The cofactor is heme b.

It is found in the mitochondrion inner membrane. In terms of biological role, component of the ubiquinol-cytochrome c reductase complex (complex III or cytochrome b-c1 complex) that is part of the mitochondrial respiratory chain. The b-c1 complex mediates electron transfer from ubiquinol to cytochrome c. Contributes to the generation of a proton gradient across the mitochondrial membrane that is then used for ATP synthesis. The protein is Cytochrome b (COB) of Wickerhamomyces canadensis (Yeast).